The following is a 178-amino-acid chain: MNLFVYIAQNPTLTKWFFCCVCTILTMPFFKKPYRKRGISRTPYEWLTYADKCVIELSKSELKPNEEKELPKDIKEDCKTVEEKEKVVPRKPLQSEGINEDDSQKNGELIVLHGINHQAAMLTACGLFMVTSSNTNKWKIAFASFLLGMFFTQFGFQKSERSINAEKLESIEKPENDN.

At M1–T12 the chain is on the cytoplasmic side. Residues L13 to F30 traverse the membrane as a helical; Signal-anchor for type II membrane protein segment. At K31 to N178 the chain is on the lumenal side.

The protein resides in the endoplasmic reticulum membrane. Has a role in meiosis. The polypeptide is Meiotically up-regulated gene 95 protein (mug95) (Schizosaccharomyces pombe (strain 972 / ATCC 24843) (Fission yeast)).